Here is a 429-residue protein sequence, read N- to C-terminus: Aspartate--tRNA(Asp/Asn) ligase (429 aa).

Residue Glu167 participates in L-aspartate binding. Residues 189–192 (QLYK) form an aspartate region. Arg210 contacts L-aspartate. ATP contacts are provided by residues 210–212 (RAE) and Glu352. Mg(2+)-binding residues include Glu352 and Ser355. L-aspartate contacts are provided by Ser355 and Arg359. ATP is bound at residue 400–403 (GLAR).

It belongs to the class-II aminoacyl-tRNA synthetase family. Type 2 subfamily. Homodimer. It depends on Mg(2+) as a cofactor.

Its subcellular location is the cytoplasm. The enzyme catalyses tRNA(Asx) + L-aspartate + ATP = L-aspartyl-tRNA(Asx) + AMP + diphosphate. Aspartyl-tRNA synthetase with relaxed tRNA specificity since it is able to aspartylate not only its cognate tRNA(Asp) but also tRNA(Asn). Reaction proceeds in two steps: L-aspartate is first activated by ATP to form Asp-AMP and then transferred to the acceptor end of tRNA(Asp/Asn). The protein is Aspartate--tRNA(Asp/Asn) ligase of Sulfurisphaera tokodaii (strain DSM 16993 / JCM 10545 / NBRC 100140 / 7) (Sulfolobus tokodaii).